Consider the following 212-residue polypeptide: Probable transaldolase (212 aa).

Lys-84 (schiff-base intermediate with substrate) is an active-site residue.

Belongs to the transaldolase family. Type 3B subfamily.

The protein resides in the cytoplasm. The enzyme catalyses D-sedoheptulose 7-phosphate + D-glyceraldehyde 3-phosphate = D-erythrose 4-phosphate + beta-D-fructose 6-phosphate. It functions in the pathway carbohydrate degradation; pentose phosphate pathway; D-glyceraldehyde 3-phosphate and beta-D-fructose 6-phosphate from D-ribose 5-phosphate and D-xylulose 5-phosphate (non-oxidative stage): step 2/3. Its function is as follows. Transaldolase is important for the balance of metabolites in the pentose-phosphate pathway. The polypeptide is Probable transaldolase (Bacillus velezensis (strain DSM 23117 / BGSC 10A6 / LMG 26770 / FZB42) (Bacillus amyloliquefaciens subsp. plantarum)).